Consider the following 271-residue polypeptide: Ubiquitin thioesterase OTUB1 (271 aa).

Residue Ala-2 is modified to N-acetylalanine. Phosphoserine is present on Ser-16. Tyr-26 bears the Phosphotyrosine mark. The region spanning 80–271 is the OTU domain; it reads SYIRKTRPDG…RPGHYDILYK (192 aa). Asp-88 is a catalytic residue. Cys-91 (nucleophile) is an active-site residue. Ubiquitin-conjugating enzyme E2 binding stretches follow at residues 130–138 and 169–177; these read FTEFTIEDF and DYLVVYLRL. Residues 189 to 195 form a free ubiquitin binding region; the sequence is FFEHFIE. The interval 206 to 213 is ubiquitin-conjugating enzyme E2 binding; it reads QEVEPMCK. Free ubiquitin binding regions lie at residues 214–221 and 245–251; these read ESDHIHII and NPHVFPE. Residue His-265 is part of the active site.

The protein belongs to the peptidase C65 family. In terms of assembly, interacts with RNF128. Forms a ternary complex with RNF128 and USP8. Interacts with FUS and RACK1. Interacts with UBE2D1/UBCH5A, UBE2W/UBC16 and UBE2N/UBC13. Phosphorylation at Tyr-26 by SRC and SRMS promotes deubiquitination of RPTOR via a non-catalytic process.

The protein localises to the cytoplasm. It carries out the reaction Thiol-dependent hydrolysis of ester, thioester, amide, peptide and isopeptide bonds formed by the C-terminal Gly of ubiquitin (a 76-residue protein attached to proteins as an intracellular targeting signal).. By free ubiquitin: binding of free ubiquitin triggers conformational changes in the OTU domain and formation of a ubiquitin-binding helix in the N-terminus, promoting binding of the conjugated donor ubiquitin in UBE2N/UBC13 to OTUB1. In terms of biological role, hydrolase that can specifically remove compared to 'Lys-48'-linked conjugated ubiquitin from proteins and plays an important regulatory role at the level of protein turnover by preventing degradation. Regulator of T-cell anergy, a phenomenon that occurs when T-cells are rendered unresponsive to antigen rechallenge and no longer respond to their cognate antigen. Acts via its interaction with RNF128/GRAIL. Surprisingly, it regulates RNF128-mediated ubiquitination, but does not deubiquitinate polyubiquitinated RNF128. Deubiquitinates estrogen receptor alpha (ESR1). Mediates deubiquitination of 'Lys-48'-linked polyubiquitin chains, but not 'Lys-63'-linked polyubiquitin chains. Not able to cleave di-ubiquitin. Also capable of removing NEDD8 from NEDD8 conjugates, but with a much lower preference compared to 'Lys-48'-linked ubiquitin. Functionally, plays a key non-catalytic role in DNA repair regulation by inhibiting activity of RNF168, an E3 ubiquitin-protein ligase that promotes accumulation of 'Lys-63'-linked histone H2A and H2AX at DNA damage sites. Inhibits RNF168 independently of ubiquitin thioesterase activity by binding and inhibiting UBE2N/UBC13, the E2 partner of RNF168, thereby limiting spreading of 'Lys-63'-linked histone H2A and H2AX marks. Inhibition occurs by binding to free ubiquitin: free ubiquitin acts as an allosteric regulator that increases affinity for UBE2N/UBC13 and disrupts interaction with UBE2V1. The OTUB1-UBE2N/UBC13-free ubiquitin complex adopts a configuration that mimics a cleaved 'Lys48'-linked di-ubiquitin chain. Acts as a regulator of mTORC1 and mTORC2 complexes. When phosphorylated at Tyr-26, acts as an activator of the mTORC1 complex by mediating deubiquitination of RPTOR via a non-catalytic process: acts by binding and inhibiting the activity of the ubiquitin-conjugating enzyme E2 (UBE2D1/UBCH5A, UBE2W/UBC16 and UBE2N/UBC13), thereby preventing ubiquitination of RPTOR. Can also act as an inhibitor of the mTORC1 and mTORC2 complexes in response to amino acids by mediating non-catalytic deubiquitination of DEPTOR. The chain is Ubiquitin thioesterase OTUB1 (Otub1) from Mus musculus (Mouse).